The following is a 248-amino-acid chain: Ureidoacrylate amidohydrolase RutB (248 aa).

Asp-41 functions as the Proton acceptor in the catalytic mechanism. Residue Lys-150 is part of the active site. Cys-183 acts as the Nucleophile in catalysis.

It belongs to the isochorismatase family. RutB subfamily.

It catalyses the reaction (Z)-3-ureidoacrylate + H2O + H(+) = (Z)-3-aminoacrylate + NH4(+) + CO2. The catalysed reaction is (Z)-3-ureidoacrylate + H2O = (Z)-3-aminoacrylate + carbamate + H(+). It carries out the reaction (Z)-2-methylureidoacrylate + H2O + H(+) = (Z)-2-methylaminoacrylate + NH4(+) + CO2. Hydrolyzes ureidoacrylate to form aminoacrylate and carbamate. The carbamate hydrolyzes spontaneously, thereby releasing one of the nitrogen atoms of the pyrimidine ring as ammonia and one of its carbon atoms as CO2. This chain is Ureidoacrylate amidohydrolase RutB, found in Methylorubrum extorquens (strain DSM 6343 / CIP 106787 / DM4) (Methylobacterium extorquens).